The following is a 468-amino-acid chain: ATP synthase subunit beta (468 aa).

Residue 155–162 participates in ATP binding; the sequence is GGAGVGKT.

The protein belongs to the ATPase alpha/beta chains family. As to quaternary structure, F-type ATPases have 2 components, CF(1) - the catalytic core - and CF(0) - the membrane proton channel. CF(1) has five subunits: alpha(3), beta(3), gamma(1), delta(1), epsilon(1). CF(0) has three main subunits: a(1), b(2) and c(9-12). The alpha and beta chains form an alternating ring which encloses part of the gamma chain. CF(1) is attached to CF(0) by a central stalk formed by the gamma and epsilon chains, while a peripheral stalk is formed by the delta and b chains.

It is found in the cell membrane. It carries out the reaction ATP + H2O + 4 H(+)(in) = ADP + phosphate + 5 H(+)(out). Its function is as follows. Produces ATP from ADP in the presence of a proton gradient across the membrane. The catalytic sites are hosted primarily by the beta subunits. This is ATP synthase subunit beta from Bacillus cereus (strain ATCC 10987 / NRS 248).